The chain runs to 498 residues: 3-octaprenyl-4-hydroxybenzoate carboxy-lyase (498 aa).

Asparagine 175 lines the Mn(2+) pocket. Residues 178-180 (IYR), 192-194 (RWL), and 197-198 (RG) contribute to the prenylated FMN site. Position 241 (glutamate 241) interacts with Mn(2+). Aspartate 290 functions as the Proton donor in the catalytic mechanism.

It belongs to the UbiD family. In terms of assembly, homohexamer. It depends on prenylated FMN as a cofactor. Mn(2+) is required as a cofactor.

Its subcellular location is the cell membrane. The catalysed reaction is a 4-hydroxy-3-(all-trans-polyprenyl)benzoate + H(+) = a 2-(all-trans-polyprenyl)phenol + CO2. It functions in the pathway cofactor biosynthesis; ubiquinone biosynthesis. In terms of biological role, catalyzes the decarboxylation of 3-octaprenyl-4-hydroxy benzoate to 2-octaprenylphenol, an intermediate step in ubiquinone biosynthesis. This Yersinia pestis bv. Antiqua (strain Antiqua) protein is 3-octaprenyl-4-hydroxybenzoate carboxy-lyase.